The primary structure comprises 283 residues: Thymidylate synthase (283 aa).

Arg22 is a binding site for dUMP. The active-site Nucleophile is the Cys160. DUMP-binding positions include 180–183 (RSCD), Asn191, and 221–223 (HIY). Asp183 serves as a coordination point for (6R)-5,10-methylene-5,6,7,8-tetrahydrofolate. Position 282 (Ser282) interacts with (6R)-5,10-methylene-5,6,7,8-tetrahydrofolate.

This sequence belongs to the thymidylate synthase family. Bacterial-type ThyA subfamily. As to quaternary structure, homodimer.

The protein resides in the cytoplasm. It catalyses the reaction dUMP + (6R)-5,10-methylene-5,6,7,8-tetrahydrofolate = 7,8-dihydrofolate + dTMP. It functions in the pathway pyrimidine metabolism; dTTP biosynthesis. Its function is as follows. Catalyzes the reductive methylation of 2'-deoxyuridine-5'-monophosphate (dUMP) to 2'-deoxythymidine-5'-monophosphate (dTMP) while utilizing 5,10-methylenetetrahydrofolate (mTHF) as the methyl donor and reductant in the reaction, yielding dihydrofolate (DHF) as a by-product. This enzymatic reaction provides an intracellular de novo source of dTMP, an essential precursor for DNA biosynthesis. The polypeptide is Thymidylate synthase (Psychromonas ingrahamii (strain DSM 17664 / CCUG 51855 / 37)).